Consider the following 124-residue polypeptide: Small ribosomal subunit protein uS12 (124 aa).

At Asp89 the chain carries 3-methylthioaspartic acid.

Belongs to the universal ribosomal protein uS12 family. Part of the 30S ribosomal subunit. Contacts proteins S8 and S17. May interact with IF1 in the 30S initiation complex.

In terms of biological role, with S4 and S5 plays an important role in translational accuracy. Interacts with and stabilizes bases of the 16S rRNA that are involved in tRNA selection in the A site and with the mRNA backbone. Located at the interface of the 30S and 50S subunits, it traverses the body of the 30S subunit contacting proteins on the other side and probably holding the rRNA structure together. The combined cluster of proteins S8, S12 and S17 appears to hold together the shoulder and platform of the 30S subunit. This chain is Small ribosomal subunit protein uS12, found in Proteus mirabilis (strain HI4320).